A 297-amino-acid chain; its full sequence is 4-diphosphocytidyl-2-C-methyl-D-erythritol kinase (297 aa).

Residues lysine 6 and aspartate 144 contribute to the active site.

Belongs to the GHMP kinase family. IspE subfamily.

It carries out the reaction 4-CDP-2-C-methyl-D-erythritol + ATP = 4-CDP-2-C-methyl-D-erythritol 2-phosphate + ADP + H(+). The protein operates within isoprenoid biosynthesis; isopentenyl diphosphate biosynthesis via DXP pathway; isopentenyl diphosphate from 1-deoxy-D-xylulose 5-phosphate: step 3/6. Its function is as follows. Catalyzes the phosphorylation of the position 2 hydroxy group of 4-diphosphocytidyl-2C-methyl-D-erythritol. This chain is 4-diphosphocytidyl-2-C-methyl-D-erythritol kinase, found in Leptospira interrogans serogroup Icterohaemorrhagiae serovar copenhageni (strain Fiocruz L1-130).